The chain runs to 89 residues: Large ribosomal subunit protein bL27 (89 aa).

A disordered region spans residues 1-20 (MAHKKAGGSSRNGRDSAGKR).

It belongs to the bacterial ribosomal protein bL27 family.

This chain is Large ribosomal subunit protein bL27, found in Rhodopseudomonas palustris (strain HaA2).